We begin with the raw amino-acid sequence, 383 residues long: TnpB-like protein ORF383B (383 aa).

The Zn(2+) site is built by C328, C331, C345, and C348.

In the N-terminal section; belongs to the transposase 2 family. It in the C-terminal section; belongs to the transposase 35 family.

The polypeptide is TnpB-like protein ORF383B (Acidianus convivator (ATV)).